Reading from the N-terminus, the 256-residue chain is MSFQILPIPMWVGTQDNYAYLLLCEETRQAAIVDPAEVNVVMPILKKKLKNKEIDLQAILTTHHHADHSGGNLNLKKEFPHVTIYGGSDQNGVSHVLQDKETLRIGNVQIEALHTPCHTRDSICFYAHSSNEHAVFTGDTLFNAGCGRFFEGTAAEMHIALNAVLSSLPNNTVIYPGHEYTKSNVKFASKHLQSEALNHLEGLCNHNQFIAGHITMGQEKQFNPFMRVTDPELQKHLGLNDPIKVMDELRTLKNQG.

Residues His63, His65, Asp67, His68, His118, and Asp139 each coordinate Zn(2+). Residues 148 to 150 (RFF), 178 to 180 (HEY), and 250 to 253 (RTLK) each bind substrate. His178 is a Zn(2+) binding site.

This sequence belongs to the metallo-beta-lactamase superfamily. Glyoxalase II family. It depends on Zn(2+) as a cofactor.

The protein resides in the cytoplasm. It localises to the nucleus. The catalysed reaction is an S-(2-hydroxyacyl)glutathione + H2O = a 2-hydroxy carboxylate + glutathione + H(+). It catalyses the reaction (R)-S-lactoylglutathione + H2O = (R)-lactate + glutathione + H(+). It functions in the pathway secondary metabolite metabolism; methylglyoxal degradation; (R)-lactate from methylglyoxal: step 2/2. Its function is as follows. Thiolesterase that catalyzes the hydrolysis of S-D-lactoylglutathione to form glutathione and D-lactic acid. Involved in the metabolism of methylglyoxal, a toxic compound for yeast proliferation, by converting methylglyoxal to lactate via S-D-lactoylglutathione by sequential enzyme reactions catalyzed by glyoxalase I and glyoxalase II. This chain is Probable hydroxyacylglutathione hydrolase SPCC13B11.03c, found in Schizosaccharomyces pombe (strain 972 / ATCC 24843) (Fission yeast).